The primary structure comprises 324 residues: Aspartate carbamoyltransferase catalytic subunit (324 aa).

The carbamoyl phosphate site is built by arginine 55 and threonine 56. Residue lysine 83 coordinates L-aspartate. Positions 105, 135, and 138 each coordinate carbamoyl phosphate. Arginine 173 and arginine 227 together coordinate L-aspartate. Positions 268 and 269 each coordinate carbamoyl phosphate.

This sequence belongs to the aspartate/ornithine carbamoyltransferase superfamily. ATCase family. In terms of assembly, heterododecamer (2C3:3R2) of six catalytic PyrB chains organized as two trimers (C3), and six regulatory PyrI chains organized as three dimers (R2).

It catalyses the reaction carbamoyl phosphate + L-aspartate = N-carbamoyl-L-aspartate + phosphate + H(+). Its pathway is pyrimidine metabolism; UMP biosynthesis via de novo pathway; (S)-dihydroorotate from bicarbonate: step 2/3. Catalyzes the condensation of carbamoyl phosphate and aspartate to form carbamoyl aspartate and inorganic phosphate, the committed step in the de novo pyrimidine nucleotide biosynthesis pathway. The polypeptide is Aspartate carbamoyltransferase catalytic subunit (Nocardioides sp. (strain ATCC BAA-499 / JS614)).